The following is a 290-amino-acid chain: Fructose-1,6-bisphosphatase class 1 (290 aa).

The Mg(2+) site is built by E78, D96, L98, and D99. Substrate contacts are provided by residues 99-102, Y201, and K226; that span reads DGSS. Residue E232 coordinates Mg(2+).

Belongs to the FBPase class 1 family. As to quaternary structure, homotetramer. It depends on Mg(2+) as a cofactor.

It is found in the cytoplasm. The catalysed reaction is beta-D-fructose 1,6-bisphosphate + H2O = beta-D-fructose 6-phosphate + phosphate. It participates in carbohydrate biosynthesis; gluconeogenesis. The polypeptide is Fructose-1,6-bisphosphatase class 1 (Helicobacter pylori (strain ATCC 700392 / 26695) (Campylobacter pylori)).